Here is a 220-residue protein sequence, read N- to C-terminus: uncharacterized protein (220 aa).

This is an uncharacterized protein from Bacillus subtilis (strain 168).